The chain runs to 301 residues: Tetrapeptide repeat homeobox protein 2 (301 aa).

Disordered stretches follow at residues 1–27 (MQDPGHLQGPPLALDPPRRQRQERTVY) and 273–301 (SLSTTTSQYKEEDGFVDKNHSVPRSLLDL). 2 stretches are compositionally biased toward basic and acidic residues: residues 16-26 (PPRRQRQERTV) and 281-292 (YKEEDGFVDKNH). The homeobox DNA-binding region spans 20 to 79 (QRQERTVYTESQQKVLEFYFQKDQYPNYDQRLNLAEMLSLREQQLQVWFKNRRAKLARER).

It belongs to the paired homeobox family.

The protein resides in the nucleus. Functionally, transcription factor expressed after fertilization required for zygotic genome activation (ZGA), a critical event in early embryonic development during which the developmental control passes from maternally provided mRNAs to the expression of the zygotic genome after fertilization. Binds and activates expression of key ZGA marker genes, such as NANOGNB, ZSCAN4, DUXB, KLF5 and DPPA3. Binds to regulatory DNA sequences containing a 5'-TAATCC-3' sequence motif. The chain is Tetrapeptide repeat homeobox protein 2 from Homo sapiens (Human).